The primary structure comprises 92 residues: Small ribosomal subunit protein uS19 (92 aa).

This sequence belongs to the universal ribosomal protein uS19 family.

Its function is as follows. Protein S19 forms a complex with S13 that binds strongly to the 16S ribosomal RNA. This Staphylococcus epidermidis (strain ATCC 35984 / DSM 28319 / BCRC 17069 / CCUG 31568 / BM 3577 / RP62A) protein is Small ribosomal subunit protein uS19.